The primary structure comprises 447 residues: MNSQQIYETSHMISNENLDVRTITMGISLLDCIDSDSTVACQKIYDKITTKAKNLVKVGQQIEAEYGIPIANKRVTVTPISLIAAASQDHDYVKYAKTLDKAAKTLGIDFIGGYSALVQKGYQTGDRTLIASLPEALAETDFVCASVNVGSTRSGINMDAVAQMGEVVVAGSKLDMMTNAKLVIFCNAVEDNPFMAGGFHGVGEPDVVINVGVSGPGVIKTALEKVKGESMDVVAETIKKTAFKVTRMGQLVGTVGAERLGVQFGIVDLSLAPTAAAGDSVAEVLEEIGVAQVGTHGTTAALAMLNDAVKKGGIMACSHVGGLSGAFIPVSEDAGMIKAVNAGTLNISKLEAMTAVCSVGLDMIAIPGDTPKETISAMIADEAAIGMINNKTTAVRVIPAPGKKVGDTVEFGGLLGYAPVMAVNKVASTAMINRGGLIPAPIHSFKN.

Belongs to the UPF0210 family. In terms of assembly, homodimer.

In Limosilactobacillus reuteri (strain DSM 20016) (Lactobacillus reuteri), this protein is UPF0210 protein Lreu_0940.